The chain runs to 259 residues: Deoxyribose-phosphate aldolase (259 aa).

Residue aspartate 102 is the Proton donor/acceptor of the active site. The active-site Schiff-base intermediate with acetaldehyde is lysine 167. Lysine 201 acts as the Proton donor/acceptor in catalysis.

The protein belongs to the DeoC/FbaB aldolase family. DeoC type 2 subfamily.

It localises to the cytoplasm. It catalyses the reaction 2-deoxy-D-ribose 5-phosphate = D-glyceraldehyde 3-phosphate + acetaldehyde. Its pathway is carbohydrate degradation; 2-deoxy-D-ribose 1-phosphate degradation; D-glyceraldehyde 3-phosphate and acetaldehyde from 2-deoxy-alpha-D-ribose 1-phosphate: step 2/2. In terms of biological role, catalyzes a reversible aldol reaction between acetaldehyde and D-glyceraldehyde 3-phosphate to generate 2-deoxy-D-ribose 5-phosphate. The protein is Deoxyribose-phosphate aldolase of Escherichia coli O8 (strain IAI1).